A 1297-amino-acid chain; its full sequence is Phosphoribosylformylglycinamidine synthase (1297 aa).

Positions 301 to 329 are disordered; it reads TAISPFPGAATGSGGEIRDEGATGRGAKP. ATP is bound at residue 308 to 319; that stretch reads GAATGSGGEIRD. Residues aspartate 680, glutamate 719, asparagine 723, and aspartate 887 each coordinate Mg(2+). Serine 889 is an ATP binding site. Residues 1045-1297 form the Glutamine amidotransferase type-1 domain; sequence IAILREQGVN…RLFRNARMVF (253 aa). Catalysis depends on cysteine 1138, which acts as the Nucleophile. Catalysis depends on residues histidine 1263 and glutamate 1265.

In the N-terminal section; belongs to the FGAMS family. Monomer.

The protein resides in the cytoplasm. The catalysed reaction is N(2)-formyl-N(1)-(5-phospho-beta-D-ribosyl)glycinamide + L-glutamine + ATP + H2O = 2-formamido-N(1)-(5-O-phospho-beta-D-ribosyl)acetamidine + L-glutamate + ADP + phosphate + H(+). The protein operates within purine metabolism; IMP biosynthesis via de novo pathway; 5-amino-1-(5-phospho-D-ribosyl)imidazole from N(2)-formyl-N(1)-(5-phospho-D-ribosyl)glycinamide: step 1/2. Phosphoribosylformylglycinamidine synthase involved in the purines biosynthetic pathway. Catalyzes the ATP-dependent conversion of formylglycinamide ribonucleotide (FGAR) and glutamine to yield formylglycinamidine ribonucleotide (FGAM) and glutamate. This is Phosphoribosylformylglycinamidine synthase from Haemophilus influenzae (strain ATCC 51907 / DSM 11121 / KW20 / Rd).